We begin with the raw amino-acid sequence, 250 residues long: Cell division protein ZapD (250 aa).

Belongs to the ZapD family. Interacts with FtsZ.

Its subcellular location is the cytoplasm. Its function is as follows. Cell division factor that enhances FtsZ-ring assembly. Directly interacts with FtsZ and promotes bundling of FtsZ protofilaments, with a reduction in FtsZ GTPase activity. The protein is Cell division protein ZapD of Pectobacterium atrosepticum (strain SCRI 1043 / ATCC BAA-672) (Erwinia carotovora subsp. atroseptica).